Consider the following 363-residue polypeptide: NADH-quinone oxidoreductase subunit H (363 aa).

9 consecutive transmembrane segments (helical) span residues 62–82, 96–116, 127–147, 163–183, 202–222, 238–257, 264–286, 299–319, and 339–359; these read GPMY…KLLF, FVIA…VVPF, VGLL…ILAG, AAQV…VMIA, FFDW…VSGV, EIVA…LFFL, ILVS…QGWV, KGGW…YIWF, and FIPL…YGVI.

This sequence belongs to the complex I subunit 1 family. NDH-1 is composed of 14 different subunits. Subunits NuoA, H, J, K, L, M, N constitute the membrane sector of the complex.

It is found in the cell inner membrane. The catalysed reaction is a quinone + NADH + 5 H(+)(in) = a quinol + NAD(+) + 4 H(+)(out). Its function is as follows. NDH-1 shuttles electrons from NADH, via FMN and iron-sulfur (Fe-S) centers, to quinones in the respiratory chain. The immediate electron acceptor for the enzyme in this species is believed to be ubiquinone. Couples the redox reaction to proton translocation (for every two electrons transferred, four hydrogen ions are translocated across the cytoplasmic membrane), and thus conserves the redox energy in a proton gradient. This subunit may bind ubiquinone. The sequence is that of NADH-quinone oxidoreductase subunit H from Xanthomonas axonopodis pv. citri (strain 306).